We begin with the raw amino-acid sequence, 359 residues long: UPF0284 protein MAE_56900 (359 aa).

The protein belongs to the UPF0284 family.

The polypeptide is UPF0284 protein MAE_56900 (Microcystis aeruginosa (strain NIES-843 / IAM M-2473)).